The primary structure comprises 97 residues: MKLRPLHDRVVIRRSEEETKTAGGIVLPGSAAEKPNQGEVVAVGTGKVLENGEVRPLAVKVGDKVVFGPYSGSNTVKVDGEDLLVMGENEILAVIEA.

The protein belongs to the GroES chaperonin family. Heptamer of 7 subunits arranged in a ring. Interacts with the chaperonin GroEL.

It localises to the cytoplasm. In terms of biological role, together with the chaperonin GroEL, plays an essential role in assisting protein folding. The GroEL-GroES system forms a nano-cage that allows encapsulation of the non-native substrate proteins and provides a physical environment optimized to promote and accelerate protein folding. GroES binds to the apical surface of the GroEL ring, thereby capping the opening of the GroEL channel. This chain is Co-chaperonin GroES, found in Ectopseudomonas mendocina (strain ymp) (Pseudomonas mendocina).